Reading from the N-terminus, the 198-residue chain is Probable GTP-binding protein EngB (198 aa).

An EngB-type G domain is found at 21-195; sequence NIPEVCFVGR…YDALIRLLEV (175 aa). Residues 29–36, 56–60, 75–78, 142–145, and 174–176 each bind GTP; these read GRSNVGKS, GKTRL, DAPG, TKLD, and VSN. Mg(2+)-binding residues include Ser36 and Thr58.

Belongs to the TRAFAC class TrmE-Era-EngA-EngB-Septin-like GTPase superfamily. EngB GTPase family. It depends on Mg(2+) as a cofactor.

Functionally, necessary for normal cell division and for the maintenance of normal septation. The protein is Probable GTP-binding protein EngB of Mesoplasma florum (strain ATCC 33453 / NBRC 100688 / NCTC 11704 / L1) (Acholeplasma florum).